Consider the following 408-residue polypeptide: LL-diaminopimelate aminotransferase (408 aa).

Positions 15 and 42 each coordinate substrate. Pyridoxal 5'-phosphate is bound by residues tyrosine 72, 108–109 (SK), tyrosine 132, asparagine 187, tyrosine 218, and 246–248 (SFS). Lysine 109, tyrosine 132, and asparagine 187 together coordinate substrate. Lysine 249 is subject to N6-(pyridoxal phosphate)lysine. Residues arginine 257 and asparagine 292 each coordinate pyridoxal 5'-phosphate. Residues asparagine 292 and arginine 388 each coordinate substrate.

This sequence belongs to the class-I pyridoxal-phosphate-dependent aminotransferase family. LL-diaminopimelate aminotransferase subfamily. In terms of assembly, homodimer. Pyridoxal 5'-phosphate is required as a cofactor.

It catalyses the reaction (2S,6S)-2,6-diaminopimelate + 2-oxoglutarate = (S)-2,3,4,5-tetrahydrodipicolinate + L-glutamate + H2O + H(+). It participates in amino-acid biosynthesis; L-lysine biosynthesis via DAP pathway; LL-2,6-diaminopimelate from (S)-tetrahydrodipicolinate (aminotransferase route): step 1/1. In terms of biological role, involved in the synthesis of meso-diaminopimelate (m-DAP or DL-DAP), required for both lysine and peptidoglycan biosynthesis. Catalyzes the direct conversion of tetrahydrodipicolinate to LL-diaminopimelate. In Prochlorococcus marinus (strain AS9601), this protein is LL-diaminopimelate aminotransferase.